A 270-amino-acid chain; its full sequence is Cell surface glycoprotein CD200 receptor 4 (270 aa).

The signal sequence occupies residues 1–25 (MHALGRIPTLTLLIFINIFVSGSSC). The 120-residue stretch at 26-145 (TDENQTIQND…GNLEKVYDLQ (120 aa)) folds into the Ig-like V-type domain. The Extracellular segment spans residues 26–241 (TDENQTIQND…TMTTPRSLLT (216 aa)). N-linked (GlcNAc...) asparagine glycosylation is found at asparagine 29 and asparagine 44. Disulfide bonds link cysteine 58–cysteine 129, cysteine 82–cysteine 97, cysteine 164–cysteine 213, and cysteine 183–cysteine 201. The Ig-like C2-type domain occupies 134–229 (PEGNLEKVYD…GNQSLSIELS (96 aa)). N-linked (GlcNAc...) asparagine glycosylation occurs at asparagine 192. A helical transmembrane segment spans residues 242-262 (ILYVKMALLVIILLNVGFAFF). The Cytoplasmic segment spans residues 263-270 (QKRNFART).

Belongs to the CD200R family. As to quaternary structure, interacts with TYROBP. As to expression, highly expressed in monocytes, NK cells and a subset of NKT cells. Weakly expressed in granulocytes and B-cells (at protein level). Expressed in brain, lung, testis, thymus, intestine and uterus. Expressed in bone marrow derived-macrophage and dendritic cells and mast cells.

Its subcellular location is the membrane. Involved in the recruitment or surface expression of the TYROBP receptor. In Mus musculus (Mouse), this protein is Cell surface glycoprotein CD200 receptor 4 (Cd200r4).